Reading from the N-terminus, the 302-residue chain is Ribosomal RNA small subunit methyltransferase H (302 aa).

Residues 36–38 (GGH), aspartate 56, phenylalanine 84, aspartate 99, and glutamine 106 contribute to the S-adenosyl-L-methionine site.

It belongs to the methyltransferase superfamily. RsmH family.

It is found in the cytoplasm. It catalyses the reaction cytidine(1402) in 16S rRNA + S-adenosyl-L-methionine = N(4)-methylcytidine(1402) in 16S rRNA + S-adenosyl-L-homocysteine + H(+). Functionally, specifically methylates the N4 position of cytidine in position 1402 (C1402) of 16S rRNA. This Flavobacterium johnsoniae (strain ATCC 17061 / DSM 2064 / JCM 8514 / BCRC 14874 / CCUG 350202 / NBRC 14942 / NCIMB 11054 / UW101) (Cytophaga johnsonae) protein is Ribosomal RNA small subunit methyltransferase H.